Reading from the N-terminus, the 422-residue chain is Secernin-3 (422 aa).

The propeptide occupies 1–5 (MEPCS). Residue cysteine 6 is part of the active site. At cysteine 6 the chain carries Glyoxylic acid (Cys); alternate. Cysteine 6 bears the Pyruvic acid (Cys); alternate mark.

It belongs to the peptidase C69 family. Secernin subfamily.

Plays a role in thermal nociception. The sequence is that of Secernin-3 (SCRN3) from Bos taurus (Bovine).